The primary structure comprises 683 residues: Multidrug resistance protein MdtO (683 aa).

A run of 9 helical transmembrane segments spans residues 43–63 (VILI…AVLF), 75–95 (FVAI…FLIY), 100–120 (GEPL…MFLM), 125–145 (LGLV…FPAM), 158–178 (WCIV…VLWF), 402–422 (FGGA…VMPW), 426–446 (IVEL…IATS), 457–477 (MVVT…YDLV), and 483–503 (ALGI…VWPE).

This sequence belongs to the MdtO family. Could be part of a tripartite efflux system composed of MdtN, MdtO and MdtP.

Its subcellular location is the cell inner membrane. Its function is as follows. Could be involved in resistance to puromycin, acriflavine and tetraphenylarsonium chloride. This is Multidrug resistance protein MdtO (mdtO) from Escherichia coli (strain K12).